A 135-amino-acid chain; its full sequence is S-protein homolog 7 (135 aa).

The first 20 residues, 1-20 (MNNLFVLVIIIVLSAGSNNG), serve as a signal peptide directing secretion.

This sequence belongs to the plant self-incompatibility (S1) protein family.

The protein localises to the secreted. The polypeptide is S-protein homolog 7 (Arabidopsis thaliana (Mouse-ear cress)).